A 329-amino-acid chain; its full sequence is Microtubule-associated protein RP/EB family member 1C (329 aa).

The 103-residue stretch at Phe13–Asp115 folds into the Calponin-homology (CH) domain. The segment covering Arg130 to Lys141 has biased composition (basic and acidic residues). A disordered region spans residues Arg130–Ala203. A compositionally biased stretch (low complexity) spans Ser174 to Gly185. Residues Pro193 to Gly263 enclose the EB1 C-terminal domain. A required for nuclear localization region spans residues Lys289–Arg311.

It belongs to the MAPRE family. As to quaternary structure, homodimer. As to expression, highly expressed in the root and shoot meristems, in guard cells of leaf stomata, pollen grains and pollen tubes.

The protein resides in the nucleus. It localises to the cytoplasm. Its subcellular location is the cytoskeleton. It is found in the spindle. The protein localises to the phragmoplast. Plant-specific EB1 subtype that functions preferentially at early stages of plant mitosis by regulating spindle positioning and chromosome segregation. Accumulates in the prophase nucleus and is required to maintain spindle bipolarity during premetaphase and/or metaphase and for efficient segregation of chromosomes at anaphase. May play a role in the dynamics of microtubule network in elongating pollen tubes. In Arabidopsis thaliana (Mouse-ear cress), this protein is Microtubule-associated protein RP/EB family member 1C (EB1C).